A 465-amino-acid polypeptide reads, in one-letter code: Kinesin-like protein KIN-1 (465 aa).

Residues 3–334 (NVTVCARFRP…LRFGMRAKHI (332 aa)) form the Kinesin motor domain. 87 to 94 (GQTGAGKT) is an ATP binding site. The segment at 338–358 (PRASEVKSAKAQEEPSSVTKD) is disordered. A compositionally biased stretch (basic and acidic residues) spans 341 to 358 (SEVKSAKAQEEPSSVTKD). Positions 402-444 (VYEDIVSKTIQSLQQAVDELQQKVKKLEAENIGIQEQALRNHE) form a coiled coil.

This sequence belongs to the TRAFAC class myosin-kinesin ATPase superfamily. Kinesin family. KIN-1 subfamily. As to quaternary structure, homodimer. Interacts with WIP1 and WIP2. Specifically expressed in ovules and anthers.

Functionally, kinesin-like motor protein that promotes synapsis and is required for proper crossover distribution in meiosis. Plays a role in the nuclear division cycles during megagametogenesis. This is Kinesin-like protein KIN-1 from Arabidopsis thaliana (Mouse-ear cress).